The chain runs to 552 residues: Putative transport protein HSM_0534 (552 aa).

5 helical membrane passes run 4–24, 28–48, 67–87, 95–115, and 157–177; these read IAIT…IGHW, GVGL…HFMN, LILF…ASLL, GLAT…YKVV, and MAYA…MWLI. RCK C-terminal domains follow at residues 190–275 and 277–360; these read KQFQ…VIGE and IDMP…IIGN. A run of 6 helical transmembrane segments spans residues 370–390, 402–424, 438–458, 463–483, 495–515, and 529–549; these read MLPV…PFYI, AGGP…LYWF, IVLF…DTLV, LEWM…TGII, LCGL…ANAI, and VYPL…ILLW.

The protein belongs to the AAE transporter (TC 2.A.81) family. YidE subfamily.

It localises to the cell membrane. In Histophilus somni (strain 2336) (Haemophilus somnus), this protein is Putative transport protein HSM_0534.